The chain runs to 734 residues: Translation initiation factor IF-2 (734 aa).

The segment at 39 to 110 (SKFAPRSSFT…TGKPETKKRE (72 aa)) is disordered. The span at 82–110 (DYEKRKLAEQRATRRLKGDTGKPETKKRE) shows a compositional bias: basic and acidic residues. In terms of domain architecture, tr-type G spans 238 to 405 (NRPPIVTVMG…SIVLQAEILD (168 aa)). A G1 region spans residues 247-254 (GHVDHGKT). Residue 247-254 (GHVDHGKT) participates in GTP binding. The G2 stretch occupies residues 272 to 276 (GITQH). The G3 stretch occupies residues 293-296 (DTPG). GTP contacts are provided by residues 293–297 (DTPGH) and 347–350 (NKCD). The segment at 347–350 (NKCD) is G4. The G5 stretch occupies residues 383–385 (SAK).

This sequence belongs to the TRAFAC class translation factor GTPase superfamily. Classic translation factor GTPase family. IF-2 subfamily.

It localises to the cytoplasm. In terms of biological role, one of the essential components for the initiation of protein synthesis. Protects formylmethionyl-tRNA from spontaneous hydrolysis and promotes its binding to the 30S ribosomal subunits. Also involved in the hydrolysis of GTP during the formation of the 70S ribosomal complex. The sequence is that of Translation initiation factor IF-2 from Pelagibacter ubique (strain HTCC1062).